A 262-amino-acid polypeptide reads, in one-letter code: 1-(5-phosphoribosyl)-5-[(5-phosphoribosylamino)methylideneamino] imidazole-4-carboxamide isomerase (262 aa).

Asp8 acts as the Proton acceptor in catalysis. Asp129 functions as the Proton donor in the catalytic mechanism. Positions 243 to 262 (KDNVGQEDHSLPRCEPGPRG) are disordered.

Belongs to the HisA/HisF family.

The protein localises to the cytoplasm. It catalyses the reaction 1-(5-phospho-beta-D-ribosyl)-5-[(5-phospho-beta-D-ribosylamino)methylideneamino]imidazole-4-carboxamide = 5-[(5-phospho-1-deoxy-D-ribulos-1-ylimino)methylamino]-1-(5-phospho-beta-D-ribosyl)imidazole-4-carboxamide. It functions in the pathway amino-acid biosynthesis; L-histidine biosynthesis; L-histidine from 5-phospho-alpha-D-ribose 1-diphosphate: step 4/9. In Desulforudis audaxviator (strain MP104C), this protein is 1-(5-phosphoribosyl)-5-[(5-phosphoribosylamino)methylideneamino] imidazole-4-carboxamide isomerase.